Here is a 397-residue protein sequence, read N- to C-terminus: Riboflavin biosynthesis protein RibBA (397 aa).

The DHBP synthase stretch occupies residues 1-199; sequence MFHRIEEALE…IEDLIAYRRH (199 aa). D-ribulose 5-phosphate contacts are provided by residues 26 to 27, D31, 138 to 142, and E162; these read RE and RAGHT. E27 is a Mg(2+) binding site. Residue H141 coordinates Mg(2+). Residues 200-397 are GTP cyclohydrolase II; it reads HETLVTREVE…VNKLGHLLNL (198 aa). 250-254 is a binding site for GTP; the sequence is RVHSE. The Zn(2+) site is built by C255, C266, and C268. Residues Q271, 293 to 295, and T315 each bind GTP; that span reads EGR. D327 acts as the Proton acceptor; for GTP cyclohydrolase activity in catalysis. R329 serves as the catalytic Nucleophile; for GTP cyclohydrolase activity. T350 and K355 together coordinate GTP.

This sequence in the N-terminal section; belongs to the DHBP synthase family. The protein in the C-terminal section; belongs to the GTP cyclohydrolase II family. Mg(2+) is required as a cofactor. Mn(2+) serves as cofactor. The cofactor is Zn(2+).

The catalysed reaction is D-ribulose 5-phosphate = (2S)-2-hydroxy-3-oxobutyl phosphate + formate + H(+). It catalyses the reaction GTP + 4 H2O = 2,5-diamino-6-hydroxy-4-(5-phosphoribosylamino)-pyrimidine + formate + 2 phosphate + 3 H(+). It participates in cofactor biosynthesis; riboflavin biosynthesis; 2-hydroxy-3-oxobutyl phosphate from D-ribulose 5-phosphate: step 1/1. The protein operates within cofactor biosynthesis; riboflavin biosynthesis; 5-amino-6-(D-ribitylamino)uracil from GTP: step 1/4. Functionally, catalyzes the conversion of D-ribulose 5-phosphate to formate and 3,4-dihydroxy-2-butanone 4-phosphate. Its function is as follows. Catalyzes the conversion of GTP to 2,5-diamino-6-ribosylamino-4(3H)-pyrimidinone 5'-phosphate (DARP), formate and pyrophosphate. The protein is Riboflavin biosynthesis protein RibBA of Bacillus cereus (strain AH187).